The chain runs to 435 residues: Hydrogenobyrinate a,c-diamide synthase (435 aa).

The GATase cobBQ-type domain occupies 247–435 (RIALARDAAF…TGSFFHLIAG (189 aa)). The active-site Nucleophile is the Cys329.

Belongs to the CobB/CbiA family. The cofactor is Mg(2+).

The catalysed reaction is hydrogenobyrinate + 2 L-glutamine + 2 ATP + 2 H2O = hydrogenobyrinate a,c-diamide + 2 L-glutamate + 2 ADP + 2 phosphate + 2 H(+). The protein operates within cofactor biosynthesis; adenosylcobalamin biosynthesis; cob(II)yrinate a,c-diamide from precorrin-2 (aerobic route): step 9/10. Catalyzes the ATP-dependent amidation of the two carboxylate groups at positions a and c of hydrogenobyrinate, using either L-glutamine or ammonia as the nitrogen source. The chain is Hydrogenobyrinate a,c-diamide synthase from Rhodobacter capsulatus (strain ATCC BAA-309 / NBRC 16581 / SB1003).